We begin with the raw amino-acid sequence, 288 residues long: NAD kinase (288 aa).

Asp-73 (proton acceptor) is an active-site residue. NAD(+) is bound by residues 73 to 74, Arg-78, 144 to 145, Asp-174, 185 to 190, and Ala-209; these read DG, NE, and TAYSLS.

The protein belongs to the NAD kinase family. Requires a divalent metal cation as cofactor.

It is found in the cytoplasm. It carries out the reaction NAD(+) + ATP = ADP + NADP(+) + H(+). Involved in the regulation of the intracellular balance of NAD and NADP, and is a key enzyme in the biosynthesis of NADP. Catalyzes specifically the phosphorylation on 2'-hydroxyl of the adenosine moiety of NAD to yield NADP. This is NAD kinase from Porphyromonas gingivalis (strain ATCC 33277 / DSM 20709 / CIP 103683 / JCM 12257 / NCTC 11834 / 2561).